The primary structure comprises 293 residues: N-acetylneuraminate lyase (293 aa).

Residues serine 48 and serine 49 each coordinate aceneuramate. Tyrosine 137 (proton donor) is an active-site residue. Catalysis depends on lysine 165, which acts as the Schiff-base intermediate with substrate. Aceneuramate is bound by residues threonine 167, glycine 189, aspartate 191, glutamate 192, and serine 208.

It belongs to the DapA family. NanA subfamily. As to quaternary structure, homotetramer.

It is found in the cytoplasm. The enzyme catalyses aceneuramate = aldehydo-N-acetyl-D-mannosamine + pyruvate. It functions in the pathway amino-sugar metabolism; N-acetylneuraminate degradation; D-fructose 6-phosphate from N-acetylneuraminate: step 1/5. Functionally, catalyzes the reversible aldol cleavage of N-acetylneuraminic acid (sialic acid; Neu5Ac) to form pyruvate and N-acetylmannosamine (ManNAc) via a Schiff base intermediate. This chain is N-acetylneuraminate lyase, found in Staphylococcus carnosus (strain TM300).